Here is a 184-residue protein sequence, read N- to C-terminus: Photosystem I assembly protein Ycf4 (184 aa).

A run of 2 helical transmembrane segments spans residues 22–42 (FFWA…GTSS) and 57–77 (ILFF…LFIS).

The protein belongs to the Ycf4 family.

The protein localises to the plastid. It is found in the chloroplast thylakoid membrane. In terms of biological role, seems to be required for the assembly of the photosystem I complex. This is Photosystem I assembly protein Ycf4 from Nandina domestica (Heavenly bamboo).